The chain runs to 332 residues: Biotin synthase (332 aa).

One can recognise a Radical SAM core domain in the interval 53–282; it reads HFGKKVKLNM…TKEIRISGGR (230 aa). 3 residues coordinate [4Fe-4S] cluster: C71, C75, and C78. Residues C115, C147, C207, and R277 each coordinate [2Fe-2S] cluster.

This sequence belongs to the radical SAM superfamily. Biotin synthase family. As to quaternary structure, homodimer. It depends on [4Fe-4S] cluster as a cofactor. [2Fe-2S] cluster serves as cofactor.

The catalysed reaction is (4R,5S)-dethiobiotin + (sulfur carrier)-SH + 2 reduced [2Fe-2S]-[ferredoxin] + 2 S-adenosyl-L-methionine = (sulfur carrier)-H + biotin + 2 5'-deoxyadenosine + 2 L-methionine + 2 oxidized [2Fe-2S]-[ferredoxin]. Its pathway is cofactor biosynthesis; biotin biosynthesis; biotin from 7,8-diaminononanoate: step 2/2. Functionally, catalyzes the conversion of dethiobiotin (DTB) to biotin by the insertion of a sulfur atom into dethiobiotin via a radical-based mechanism. This is Biotin synthase from Bacillus cereus (strain B4264).